Reading from the N-terminus, the 419-residue chain is Diaminopimelate decarboxylase (419 aa).

The residue at position 56 (K56) is an N6-(pyridoxal phosphate)lysine. Residues G234 and 274–277 each bind pyridoxal 5'-phosphate; that span reads EPGR. Substrate-binding residues include R277, R312, and Y316. Catalysis depends on C343, which acts as the Proton donor. Residues E344 and Y372 each coordinate substrate. Y372 provides a ligand contact to pyridoxal 5'-phosphate.

The protein belongs to the Orn/Lys/Arg decarboxylase class-II family. LysA subfamily. Homodimer. Pyridoxal 5'-phosphate serves as cofactor.

The enzyme catalyses meso-2,6-diaminopimelate + H(+) = L-lysine + CO2. Its pathway is amino-acid biosynthesis; L-lysine biosynthesis via DAP pathway; L-lysine from DL-2,6-diaminopimelate: step 1/1. Its function is as follows. Specifically catalyzes the decarboxylation of meso-diaminopimelate (meso-DAP) to L-lysine. This Archaeoglobus fulgidus (strain ATCC 49558 / DSM 4304 / JCM 9628 / NBRC 100126 / VC-16) protein is Diaminopimelate decarboxylase.